The following is a 755-amino-acid chain: Metabotropic glutamate receptor-like protein B (755 aa).

The N-terminal stretch at 1–23 (MKNLISIILLILIFFNYSKFVKS) is a signal peptide. Asparagine 16, asparagine 183, and asparagine 273 each carry an N-linked (GlcNAc...) asparagine glycan. The Extracellular portion of the chain corresponds to 24–385 (KNCKIAVLLS…VDYSSSMKLG (362 aa)). The helical transmembrane segment at 386–406 (ITITSSICIFLCIISIIIVLV) threads the bilayer. Over 407-417 (FRTARIIKSAS) the chain is Cytoplasmic. A helical membrane pass occupies residues 418-438 (PAFLFLILMGCILIFIGCIIF). Over 439–455 (SQSPNEGTCRARVWLLS) the chain is Extracellular. Residues 456 to 476 (IGYTIFLGSLLVKNWRIWLLF) traverse the membrane as a helical segment. The Cytoplasmic segment spans residues 477 to 492 (DNPKLKKRSITNWKLY). The helical transmembrane segment at 493-513 (PWVAGILAADVLILAFWQGLG) threads the bilayer. Topologically, residues 514–541 (NIRSESRIGIDSLTKYQYTNVCSSNDQG) are extracellular. Residues 542–562 (SIALYILLVFHGIKLLVACFI) form a helical membrane-spanning segment. Over 563-578 (SFKIKVVDIDEFNESK) the chain is Cytoplasmic. The chain crosses the membrane as a helical span at residues 579–599 (PIASSVYIITFCLFIVIPLMV). Residues 600 to 607 (SPQSVTSQ) lie on the Extracellular side of the membrane. The chain crosses the membrane as a helical span at residues 608–628 (VTTICVCAIVTTLISIILLFG). Over 629–755 (SKFYKMITQG…GEVEIDSNNL (127 aa)) the chain is Cytoplasmic. 2 disordered regions span residues 656-676 (QSLE…EENG) and 691-729 (FSSD…NIEE). Positions 694 to 710 (DTEDDENETQQIDEEKD) are enriched in acidic residues.

In the N-terminal section; belongs to the BMP lipoprotein family. This sequence in the C-terminal section; belongs to the G-protein coupled receptor 3 family. GABA-B receptor subfamily.

The protein resides in the membrane. In Dictyostelium discoideum (Social amoeba), this protein is Metabotropic glutamate receptor-like protein B (grlB).